A 117-amino-acid chain; its full sequence is Large ribosomal subunit protein bL20c (117 aa).

Belongs to the bacterial ribosomal protein bL20 family.

The protein localises to the plastid. It is found in the chloroplast. In terms of biological role, binds directly to 23S ribosomal RNA and is necessary for the in vitro assembly process of the 50S ribosomal subunit. It is not involved in the protein synthesizing functions of that subunit. This chain is Large ribosomal subunit protein bL20c, found in Populus trichocarpa (Western balsam poplar).